The sequence spans 308 residues: Putative integrase/recombinase y4qK (308 aa).

The Core-binding (CB) domain maps to 15 to 97 (LVMTPLRQRM…ALRFFFSVTL (83 aa)). Residues 115 to 288 (KLPIILSPDE…ATNKVCATSS (174 aa)) form the Tyr recombinase domain. Residues R150, K175, H240, R243, and H266 contribute to the active site. Y275 serves as the catalytic O-(3'-phospho-DNA)-tyrosine intermediate.

The protein belongs to the 'phage' integrase family.

In terms of biological role, may function as an integrase. The sequence is that of Putative integrase/recombinase y4qK from Sinorhizobium fredii (strain NBRC 101917 / NGR234).